A 314-amino-acid chain; its full sequence is Methionyl-tRNA formyltransferase (314 aa).

Residue 112–115 coordinates (6S)-5,6,7,8-tetrahydrofolate; sequence SLLP.

It belongs to the Fmt family.

It carries out the reaction L-methionyl-tRNA(fMet) + (6R)-10-formyltetrahydrofolate = N-formyl-L-methionyl-tRNA(fMet) + (6S)-5,6,7,8-tetrahydrofolate + H(+). Its function is as follows. Attaches a formyl group to the free amino group of methionyl-tRNA(fMet). The formyl group appears to play a dual role in the initiator identity of N-formylmethionyl-tRNA by promoting its recognition by IF2 and preventing the misappropriation of this tRNA by the elongation apparatus. This chain is Methionyl-tRNA formyltransferase, found in Tolumonas auensis (strain DSM 9187 / NBRC 110442 / TA 4).